Reading from the N-terminus, the 611-residue chain is TANK-binding kinase 1-binding protein 1 (611 aa).

The segment at Met1–Cys280 is homodimerization. A coiled-coil region spans residues Tyr48 to Ile162. Ser184 is subject to Phosphoserine. Positions Thr218–Gln277 form a coiled coil. The segment at Asp281–Asn330 is interaction with TBK1 and IKBKE. The tract at residues Ala328–Leu437 is disordered. The span at Pro346–Ala361 shows a compositional bias: pro residues. The segment covering Pro362–Ser372 has biased composition (low complexity). Ser365, Ser372, Ser379, Ser385, Ser400, and Ser415 each carry phosphoserine. Residues Pro389–Cys406 are compositionally biased toward pro residues. Pro residues predominate over residues Pro416–Gly433. A phosphoserine mark is found at Ser500 and Ser530. Residues Ile579–His605 form a UBZ1-type zinc finger. The Zn(2+) site is built by Cys582, Cys585, His601, and His605.

Homodimer. May form a heterodimer with NAP1. Interacts with TKB1 and IKBKE. Weakly interacts with DDX3X.

Adapter protein which constitutively binds TBK1 and IKBKE playing a role in antiviral innate immunity. Essential for the efficient induction of IRF-dependent transcription following infection with Sendai virus. This is TANK-binding kinase 1-binding protein 1 from Mus musculus (Mouse).